Reading from the N-terminus, the 362-residue chain is MTDMPTLDAIRQAPKALLHDHLDGGLRPETVLDIAGQVGYDGLPSTDAGELASWFRTQSHSGSLERYLEPFSHTVAVMQTPEALYRVAYECVEDLAADAVVYAEIRFAPELHINQGLTFDEIVDAVLAGFAAGERACAGAGCPIKVRLLVTAMRHAAMSREIAELAIRFRDKGVVGFDIAGAEAGYPPSRHLDAFEYMRDNNARFTIHAGEAFGLPSIHEAIAFCGADRLGHGVRIVDDIEVGPDGDVKLGRLAAILRDKRIPLELCPSSNVQTGAVASIAEHPFDLLARSRFRVTVNTDNRLMSDTSMSQEMYRLVETFGYGWSDIQRFTINAMKSAFIAFDERLEIIDEVIKPRFAVLIG.

Residues His19 and His21 each contribute to the Zn(2+) site. Substrate is bound by residues His21, Asp23, and Gly181. A Zn(2+)-binding site is contributed by His208. The active-site Proton donor is Glu211. Asp300 lines the Zn(2+) pocket.

The protein belongs to the metallo-dependent hydrolases superfamily. Adenosine and AMP deaminases family. Adenosine deaminase subfamily. Requires Zn(2+) as cofactor.

The catalysed reaction is adenosine + H2O + H(+) = inosine + NH4(+). It catalyses the reaction 2'-deoxyadenosine + H2O + H(+) = 2'-deoxyinosine + NH4(+). Its function is as follows. Catalyzes the hydrolytic deamination of adenosine and 2-deoxyadenosine. In Mycobacterium marinum (strain ATCC BAA-535 / M), this protein is Adenosine deaminase.